The chain runs to 218 residues: Thiamine-phosphate synthase (218 aa).

4-amino-2-methyl-5-(diphosphooxymethyl)pyrimidine is bound by residues 43–47 (QFRDK) and Asn-78. Mg(2+) contacts are provided by Asp-79 and Asp-98. Ser-117 lines the 4-amino-2-methyl-5-(diphosphooxymethyl)pyrimidine pocket. 143-145 (TNS) contributes to the 2-[(2R,5Z)-2-carboxy-4-methylthiazol-5(2H)-ylidene]ethyl phosphate binding site. Position 146 (Lys-146) interacts with 4-amino-2-methyl-5-(diphosphooxymethyl)pyrimidine. 2-[(2R,5Z)-2-carboxy-4-methylthiazol-5(2H)-ylidene]ethyl phosphate contacts are provided by residues Gly-174 and 194-195 (IS).

The protein belongs to the thiamine-phosphate synthase family. Mg(2+) is required as a cofactor.

The catalysed reaction is 2-[(2R,5Z)-2-carboxy-4-methylthiazol-5(2H)-ylidene]ethyl phosphate + 4-amino-2-methyl-5-(diphosphooxymethyl)pyrimidine + 2 H(+) = thiamine phosphate + CO2 + diphosphate. It carries out the reaction 2-(2-carboxy-4-methylthiazol-5-yl)ethyl phosphate + 4-amino-2-methyl-5-(diphosphooxymethyl)pyrimidine + 2 H(+) = thiamine phosphate + CO2 + diphosphate. It catalyses the reaction 4-methyl-5-(2-phosphooxyethyl)-thiazole + 4-amino-2-methyl-5-(diphosphooxymethyl)pyrimidine + H(+) = thiamine phosphate + diphosphate. The protein operates within cofactor biosynthesis; thiamine diphosphate biosynthesis; thiamine phosphate from 4-amino-2-methyl-5-diphosphomethylpyrimidine and 4-methyl-5-(2-phosphoethyl)-thiazole: step 1/1. Functionally, condenses 4-methyl-5-(beta-hydroxyethyl)thiazole monophosphate (THZ-P) and 2-methyl-4-amino-5-hydroxymethyl pyrimidine pyrophosphate (HMP-PP) to form thiamine monophosphate (TMP). This Lactococcus lactis subsp. cremoris (strain SK11) protein is Thiamine-phosphate synthase.